A 287-amino-acid polypeptide reads, in one-letter code: Bifunctional protein FolD (287 aa).

Residues 165-167 (GRG), Thr-192, and Val-233 each bind NADP(+).

This sequence belongs to the tetrahydrofolate dehydrogenase/cyclohydrolase family. Homodimer.

The enzyme catalyses (6R)-5,10-methylene-5,6,7,8-tetrahydrofolate + NADP(+) = (6R)-5,10-methenyltetrahydrofolate + NADPH. It carries out the reaction (6R)-5,10-methenyltetrahydrofolate + H2O = (6R)-10-formyltetrahydrofolate + H(+). It participates in one-carbon metabolism; tetrahydrofolate interconversion. Catalyzes the oxidation of 5,10-methylenetetrahydrofolate to 5,10-methenyltetrahydrofolate and then the hydrolysis of 5,10-methenyltetrahydrofolate to 10-formyltetrahydrofolate. This Cutibacterium acnes (strain DSM 16379 / KPA171202) (Propionibacterium acnes) protein is Bifunctional protein FolD.